Reading from the N-terminus, the 289-residue chain is RING-H2 finger protein ATL29 (289 aa).

The helical transmembrane segment at 25 to 45 (VILTVILLVFFFIGFFTLYFC) threads the bilayer. Residues 110–152 (CAICLLEFDGDHVLRLLTTCYHVFHQECIDLWFESHRTCPVCR) form an RING-type; atypical zinc finger. Residues 179-237 (TSDDEEDDHHRQQTTTQIDTWPSSGQTSSIKKEQNLPEKFSRSHSTGHSIVRNKPEEED) form a disordered region. The segment covering 191 to 207 (QTTTQIDTWPSSGQTSS) has biased composition (polar residues). Over residues 208–219 (IKKEQNLPEKFS) the composition is skewed to basic and acidic residues.

This sequence belongs to the RING-type zinc finger family. ATL subfamily.

Its subcellular location is the membrane. The enzyme catalyses S-ubiquitinyl-[E2 ubiquitin-conjugating enzyme]-L-cysteine + [acceptor protein]-L-lysine = [E2 ubiquitin-conjugating enzyme]-L-cysteine + N(6)-ubiquitinyl-[acceptor protein]-L-lysine.. Its pathway is protein modification; protein ubiquitination. The polypeptide is RING-H2 finger protein ATL29 (ATL29) (Arabidopsis thaliana (Mouse-ear cress)).